We begin with the raw amino-acid sequence, 249 residues long: ATP synthase subunit a (249 aa).

6 helical membrane passes run 33–53 (YMLI…AQLV), 83–103 (FFPL…IGII), 113–133 (LIVT…YGVA), 139–159 (FFSI…VMFI), 188–208 (VFAG…WVGG), and 216–236 (VALY…FAIL).

This sequence belongs to the ATPase A chain family. F-type ATPases have 2 components, CF(1) - the catalytic core - and CF(0) - the membrane proton channel. CF(1) has five subunits: alpha(3), beta(3), gamma(1), delta(1), epsilon(1). CF(0) has three main subunits: a(1), b(2) and c(9-12). The alpha and beta chains form an alternating ring which encloses part of the gamma chain. CF(1) is attached to CF(0) by a central stalk formed by the gamma and epsilon chains, while a peripheral stalk is formed by the delta and b chains.

It localises to the cell inner membrane. In terms of biological role, key component of the proton channel; it plays a direct role in the translocation of protons across the membrane. In Bradyrhizobium diazoefficiens (strain JCM 10833 / BCRC 13528 / IAM 13628 / NBRC 14792 / USDA 110), this protein is ATP synthase subunit a.